An 84-amino-acid chain; its full sequence is uncharacterized protein (84 aa).

This is an uncharacterized protein from Orgyia pseudotsugata multicapsid polyhedrosis virus (OpMNPV).